Here is a 488-residue protein sequence, read N- to C-terminus: 3-octaprenyl-4-hydroxybenzoate carboxy-lyase (488 aa).

Asn172 is a binding site for Mn(2+). Residues 175–177, 189–191, and 194–195 each bind prenylated FMN; these read IYR, RWL, and RG. Glu238 is a Mn(2+) binding site. The Proton donor role is filled by Asp287.

Belongs to the UbiD family. As to quaternary structure, homohexamer. The cofactor is prenylated FMN. Requires Mn(2+) as cofactor.

The protein resides in the cell membrane. The catalysed reaction is a 4-hydroxy-3-(all-trans-polyprenyl)benzoate + H(+) = a 2-(all-trans-polyprenyl)phenol + CO2. The protein operates within cofactor biosynthesis; ubiquinone biosynthesis. Its function is as follows. Catalyzes the decarboxylation of 3-octaprenyl-4-hydroxy benzoate to 2-octaprenylphenol, an intermediate step in ubiquinone biosynthesis. The protein is 3-octaprenyl-4-hydroxybenzoate carboxy-lyase of Ectopseudomonas mendocina (strain ymp) (Pseudomonas mendocina).